The chain runs to 59 residues: MAFDKKLLEIVACPVCKGKLEYDKANQQLICKADRLAYAINEGIPVLLENKATPWNEEA.

Belongs to the UPF0434 family.

The polypeptide is UPF0434 protein Shew_1640 (Shewanella loihica (strain ATCC BAA-1088 / PV-4)).